A 48-amino-acid chain; its full sequence is DNA-directed RNA polymerase subunit Rpo12 (48 aa).

Residues C9, C26, and C29 each coordinate Zn(2+).

This sequence belongs to the archaeal Rpo12/eukaryotic RPC10 RNA polymerase subunit family. Part of the RNA polymerase complex. It depends on Zn(2+) as a cofactor.

It localises to the cytoplasm. The catalysed reaction is RNA(n) + a ribonucleoside 5'-triphosphate = RNA(n+1) + diphosphate. Functionally, DNA-dependent RNA polymerase (RNAP) catalyzes the transcription of DNA into RNA using the four ribonucleoside triphosphates as substrates. This chain is DNA-directed RNA polymerase subunit Rpo12, found in Sulfurisphaera tokodaii (strain DSM 16993 / JCM 10545 / NBRC 100140 / 7) (Sulfolobus tokodaii).